The following is a 169-amino-acid chain: MDPLKICENYLTFRAIIRGSTLSPGFFRRWCFPALADVVGNIVEQEEGRFWQILPENHAFWGLLRRGFTVASFTEIITAAQLENRGRQLAFLAFISFLLRNWPSDSVVPEADRLDLVCAPAWSRMQIWSQTARLINDLQDSVLEEQGSAEEEECEEALLAGDSDDPLFG.

The protein belongs to the adenoviridae E1B 19 kDa protein family.

The chain is E1B protein, small T-antigen from Canis lupus familiaris (Dog).